The following is a 155-amino-acid chain: Large ribosomal subunit protein uL30 (155 aa).

Belongs to the universal ribosomal protein uL30 family. In terms of assembly, part of the 50S ribosomal subunit.

In Cenarchaeum symbiosum (strain A), this protein is Large ribosomal subunit protein uL30.